Consider the following 443-residue polypeptide: UDP-N-acetylmuramate--L-alanine ligase (443 aa).

110-116 (GAHGKTS) contacts ATP.

Belongs to the MurCDEF family.

It localises to the cytoplasm. It carries out the reaction UDP-N-acetyl-alpha-D-muramate + L-alanine + ATP = UDP-N-acetyl-alpha-D-muramoyl-L-alanine + ADP + phosphate + H(+). The protein operates within cell wall biogenesis; peptidoglycan biosynthesis. Cell wall formation. The chain is UDP-N-acetylmuramate--L-alanine ligase from Streptococcus suis (strain 98HAH33).